Here is a 221-residue protein sequence, read N- to C-terminus: MRESRKLDSAALYLCTDARRERGDLAEFADAALAGGVDIIQLRDKGSAGEQRFGPLEAREEIEVLATLADAARRHGALFAVNDRADIALAADADVLHLGQDDLPLTVARRIVGDRIVGRSTHDLDQVRAAVGEDVNYFCVGPCWPTPTKPGRPAPGLDLIRATAALGTDKPWFAIGGIDAERLPEVLDAGARRVVVVRAITAADDPGAAAQRLAGMLSAAG.

4-amino-2-methyl-5-(diphosphooxymethyl)pyrimidine-binding positions include 41–45 (QLRDK) and N82. Mg(2+) contacts are provided by D83 and D102. Position 120 (S120) interacts with 4-amino-2-methyl-5-(diphosphooxymethyl)pyrimidine. Residue 146-148 (TPT) coordinates 2-[(2R,5Z)-2-carboxy-4-methylthiazol-5(2H)-ylidene]ethyl phosphate. K149 is a 4-amino-2-methyl-5-(diphosphooxymethyl)pyrimidine binding site. G177 contributes to the 2-[(2R,5Z)-2-carboxy-4-methylthiazol-5(2H)-ylidene]ethyl phosphate binding site.

The protein belongs to the thiamine-phosphate synthase family. Mg(2+) is required as a cofactor.

It carries out the reaction 2-[(2R,5Z)-2-carboxy-4-methylthiazol-5(2H)-ylidene]ethyl phosphate + 4-amino-2-methyl-5-(diphosphooxymethyl)pyrimidine + 2 H(+) = thiamine phosphate + CO2 + diphosphate. The catalysed reaction is 2-(2-carboxy-4-methylthiazol-5-yl)ethyl phosphate + 4-amino-2-methyl-5-(diphosphooxymethyl)pyrimidine + 2 H(+) = thiamine phosphate + CO2 + diphosphate. The enzyme catalyses 4-methyl-5-(2-phosphooxyethyl)-thiazole + 4-amino-2-methyl-5-(diphosphooxymethyl)pyrimidine + H(+) = thiamine phosphate + diphosphate. It participates in cofactor biosynthesis; thiamine diphosphate biosynthesis; thiamine phosphate from 4-amino-2-methyl-5-diphosphomethylpyrimidine and 4-methyl-5-(2-phosphoethyl)-thiazole: step 1/1. Condenses 4-methyl-5-(beta-hydroxyethyl)thiazole monophosphate (THZ-P) and 2-methyl-4-amino-5-hydroxymethyl pyrimidine pyrophosphate (HMP-PP) to form thiamine monophosphate (TMP). The sequence is that of Thiamine-phosphate synthase from Mycolicibacterium vanbaalenii (strain DSM 7251 / JCM 13017 / BCRC 16820 / KCTC 9966 / NRRL B-24157 / PYR-1) (Mycobacterium vanbaalenii).